The primary structure comprises 428 residues: Cyclin-B1-1 (428 aa).

Belongs to the cyclin family. Cyclin AB subfamily. Interacts with FZR2/CCS52A1, FZR1/CCS52A2 and FZR3/CCS52B. In terms of tissue distribution, expressed in root tip, lateral root apex, shoot apex, leaf primordia, axillary buds, stamen and petal primordia, ovules and developing embryo.

The protein localises to the nucleus. The protein is Cyclin-B1-1 (CYCB1-1) of Arabidopsis thaliana (Mouse-ear cress).